The following is a 471-amino-acid chain: 3-isopropylmalate dehydratase large subunit (471 aa).

[4Fe-4S] cluster is bound by residues Cys347, Cys409, and Cys412.

Belongs to the aconitase/IPM isomerase family. LeuC type 1 subfamily. Heterodimer of LeuC and LeuD. [4Fe-4S] cluster serves as cofactor.

It carries out the reaction (2R,3S)-3-isopropylmalate = (2S)-2-isopropylmalate. It functions in the pathway amino-acid biosynthesis; L-leucine biosynthesis; L-leucine from 3-methyl-2-oxobutanoate: step 2/4. Its function is as follows. Catalyzes the isomerization between 2-isopropylmalate and 3-isopropylmalate, via the formation of 2-isopropylmaleate. The protein is 3-isopropylmalate dehydratase large subunit of Buchnera aphidicola subsp. Rhopalosiphum padi.